Consider the following 196-residue polypeptide: ATP-dependent Clp protease proteolytic subunit (196 aa).

The active-site Nucleophile is the serine 101. Histidine 126 is a catalytic residue.

This sequence belongs to the peptidase S14 family. As to quaternary structure, component of the chloroplastic Clp protease core complex.

The protein resides in the plastid. It localises to the chloroplast stroma. The catalysed reaction is Hydrolysis of proteins to small peptides in the presence of ATP and magnesium. alpha-casein is the usual test substrate. In the absence of ATP, only oligopeptides shorter than five residues are hydrolyzed (such as succinyl-Leu-Tyr-|-NHMec, and Leu-Tyr-Leu-|-Tyr-Trp, in which cleavage of the -Tyr-|-Leu- and -Tyr-|-Trp bonds also occurs).. Cleaves peptides in various proteins in a process that requires ATP hydrolysis. Has a chymotrypsin-like activity. Plays a major role in the degradation of misfolded proteins. This is ATP-dependent Clp protease proteolytic subunit from Barbarea verna (Land cress).